Consider the following 325-residue polypeptide: Acetyl-coenzyme A carboxylase carboxyl transferase subunit beta (325 aa).

Residues 24 to 293 (LWIKCPDSGH…AEIEVVTPEP (270 aa)) form the CoA carboxyltransferase N-terminal domain.

Belongs to the AccD/PCCB family. In terms of assembly, acetyl-CoA carboxylase is a heterohexamer composed of biotin carboxyl carrier protein (AccB), biotin carboxylase (AccC) and two subunits each of ACCase subunit alpha (AccA) and ACCase subunit beta (AccD).

Its subcellular location is the cytoplasm. It catalyses the reaction N(6)-carboxybiotinyl-L-lysyl-[protein] + acetyl-CoA = N(6)-biotinyl-L-lysyl-[protein] + malonyl-CoA. The protein operates within lipid metabolism; malonyl-CoA biosynthesis; malonyl-CoA from acetyl-CoA: step 1/1. In terms of biological role, component of the acetyl coenzyme A carboxylase (ACC) complex. Biotin carboxylase (BC) catalyzes the carboxylation of biotin on its carrier protein (BCCP) and then the CO(2) group is transferred by the transcarboxylase to acetyl-CoA to form malonyl-CoA. This chain is Acetyl-coenzyme A carboxylase carboxyl transferase subunit beta, found in Rhodopseudomonas palustris (strain BisA53).